The following is a 248-amino-acid chain: 3-deoxy-manno-octulosonate cytidylyltransferase (248 aa).

The protein belongs to the KdsB family.

The protein localises to the cytoplasm. It carries out the reaction 3-deoxy-alpha-D-manno-oct-2-ulosonate + CTP = CMP-3-deoxy-beta-D-manno-octulosonate + diphosphate. Its pathway is nucleotide-sugar biosynthesis; CMP-3-deoxy-D-manno-octulosonate biosynthesis; CMP-3-deoxy-D-manno-octulosonate from 3-deoxy-D-manno-octulosonate and CTP: step 1/1. It participates in bacterial outer membrane biogenesis; lipopolysaccharide biosynthesis. Functionally, activates KDO (a required 8-carbon sugar) for incorporation into bacterial lipopolysaccharide in Gram-negative bacteria. The chain is 3-deoxy-manno-octulosonate cytidylyltransferase from Chlorobium phaeobacteroides (strain BS1).